The following is a 414-amino-acid chain: CCA-adding enzyme (414 aa).

Gly-8 and Arg-11 together coordinate ATP. CTP contacts are provided by Gly-8 and Arg-11. Residues Asp-21 and Asp-23 each coordinate Mg(2+). Residues Arg-91, Arg-137, and Arg-140 each coordinate ATP. CTP is bound by residues Arg-91, Arg-137, and Arg-140.

This sequence belongs to the tRNA nucleotidyltransferase/poly(A) polymerase family. Bacterial CCA-adding enzyme type 2 subfamily. Mg(2+) is required as a cofactor.

It carries out the reaction a tRNA precursor + 2 CTP + ATP = a tRNA with a 3' CCA end + 3 diphosphate. It catalyses the reaction a tRNA with a 3' CCA end + 2 CTP + ATP = a tRNA with a 3' CCACCA end + 3 diphosphate. Catalyzes the addition and repair of the essential 3'-terminal CCA sequence in tRNAs without using a nucleic acid template. Adds these three nucleotides in the order of C, C, and A to the tRNA nucleotide-73, using CTP and ATP as substrates and producing inorganic pyrophosphate. tRNA 3'-terminal CCA addition is required both for tRNA processing and repair. Also involved in tRNA surveillance by mediating tandem CCA addition to generate a CCACCA at the 3' terminus of unstable tRNAs. While stable tRNAs receive only 3'-terminal CCA, unstable tRNAs are marked with CCACCA and rapidly degraded. The sequence is that of CCA-adding enzyme from Buchnera aphidicola subsp. Acyrthosiphon pisum (strain Tuc7).